Consider the following 506-residue polypeptide: UDP-glycosyltransferase eriJ (506 aa).

The protein belongs to the UDP-glycosyltransferase family.

The enzyme catalyses 11-O-acetylcyathatriol + UDP-alpha-D-xylose = erinacine Q + UDP + H(+). The catalysed reaction is 11-O-acetylcyathatriol + UDP-alpha-D-glucose = erinacine Q2 + UDP + H(+). It participates in secondary metabolite biosynthesis. Functionally, UDP-glycosyltransferase; part of the gene cluster that mediates the biosynthesis of erinacines, cyathane-xylosides that show unique biological activities, including leishmanicidal activity, stimulating activity for nerve growth-factor synthesis, and agonistic activity toward the kappa opioid receptor. Within the pathway, eriJ tranfers xylose from UDP-xylose onto C-14 of 11-O-acetyl-cyathatriol to form eracine Q, and, at a lower rate, glucose from UDP-D-glucose to produce eracine Q2. The first step of the erinacines biosynthesis pathway is catalyzed by the geranylgeranyl diphosphate (GGPP) synthase eriE via conversion of farnesyl pyrophosphate and isopentyl pyrophosphate into geranylgeranyl pyrophosphate (GGPP). GGPP is then substrate of the diterpene cyclase eriG for the production of cyatha-3,12-diene. The cytochrome P450 monooxygenase eriI then hydroxylates cyatha-3,12-diene at C-14 of the seven-membered ring to produce erinacol, which is further hydroxylated at C-15 by the cytochrome P450 monooxygenase eriC to yield cyathadiol. The cytochrome P450 monooxygenase eriA then catalyzes C-11 hydroxylation in the presence of the short chain dehydrogenase/reductase (SDR) eriH, which leads to the production of cyathatriol. The acetyltransferase eriL converts cyathatriol into 11-O-acetyl-cyathatriol. The SDR eriH catalyzes further oxidation of 11-O-acetyl-cyathatriol into 1-O-acetylcyathin A3. Finally, the glycosyl transferase eriJ tranfers xylose from UDP-xylose onto C-14 of 11-O-acetyl-cyathatriol to form eracine Q. EriJ is also able to convert 11-O-acetyl-cyathatriol to eracine Q2 by using UDP-D-glucose as cosubstrate, but at a lower rate. This is UDP-glycosyltransferase eriJ from Hericium erinaceus (Lion's mane mushroom).